Here is a 208-residue protein sequence, read N- to C-terminus: Holliday junction branch migration complex subunit RuvA (208 aa).

Residues 1-63 (MIGMLTGRVE…QDAITLHGFL (63 aa)) form a domain I region. Residues 64–142 (DRDAKKTFLQ…LSQIEGASAQ (79 aa)) are domain II. A flexible linker region spans residues 143–151 (AATSKSPVD). Positions 151–208 (DTGTEQVVEGLISLGWRQQDAQQAVAEACAENDIPTPLATDDVPRVLRLALALMDRGR) are domain III.

The protein belongs to the RuvA family. As to quaternary structure, homotetramer. Forms an RuvA(8)-RuvB(12)-Holliday junction (HJ) complex. HJ DNA is sandwiched between 2 RuvA tetramers; dsDNA enters through RuvA and exits via RuvB. An RuvB hexamer assembles on each DNA strand where it exits the tetramer. Each RuvB hexamer is contacted by two RuvA subunits (via domain III) on 2 adjacent RuvB subunits; this complex drives branch migration. In the full resolvosome a probable DNA-RuvA(4)-RuvB(12)-RuvC(2) complex forms which resolves the HJ.

Its subcellular location is the cytoplasm. Functionally, the RuvA-RuvB-RuvC complex processes Holliday junction (HJ) DNA during genetic recombination and DNA repair, while the RuvA-RuvB complex plays an important role in the rescue of blocked DNA replication forks via replication fork reversal (RFR). RuvA specifically binds to HJ cruciform DNA, conferring on it an open structure. The RuvB hexamer acts as an ATP-dependent pump, pulling dsDNA into and through the RuvAB complex. HJ branch migration allows RuvC to scan DNA until it finds its consensus sequence, where it cleaves and resolves the cruciform DNA. The protein is Holliday junction branch migration complex subunit RuvA of Bifidobacterium longum (strain DJO10A).